The chain runs to 254 residues: DNA repair protein RecO (254 aa).

Belongs to the RecO family.

Involved in DNA repair and RecF pathway recombination. The protein is DNA repair protein RecO of Verminephrobacter eiseniae (strain EF01-2).